A 504-amino-acid polypeptide reads, in one-letter code: Glycerol kinase (504 aa).

Thr-12 contacts ADP. ATP-binding residues include Thr-12, Thr-13, and Ser-14. A sn-glycerol 3-phosphate-binding site is contributed by Thr-12. Arg-16 serves as a coordination point for ADP. Arg-82, Glu-83, Tyr-134, and Asp-246 together coordinate sn-glycerol 3-phosphate. Residues Arg-82, Glu-83, Tyr-134, Asp-246, and Gln-247 each coordinate glycerol. ADP-binding residues include Thr-268 and Gly-312. ATP is bound by residues Thr-268, Gly-312, Gln-316, and Gly-413. Residues Gly-413 and Asn-417 each coordinate ADP.

It belongs to the FGGY kinase family.

The catalysed reaction is glycerol + ATP = sn-glycerol 3-phosphate + ADP + H(+). It participates in polyol metabolism; glycerol degradation via glycerol kinase pathway; sn-glycerol 3-phosphate from glycerol: step 1/1. With respect to regulation, inhibited by fructose 1,6-bisphosphate (FBP). Functionally, key enzyme in the regulation of glycerol uptake and metabolism. Catalyzes the phosphorylation of glycerol to yield sn-glycerol 3-phosphate. This is Glycerol kinase from Pseudarthrobacter chlorophenolicus (strain ATCC 700700 / DSM 12829 / CIP 107037 / JCM 12360 / KCTC 9906 / NCIMB 13794 / A6) (Arthrobacter chlorophenolicus).